The primary structure comprises 174 residues: 2-C-methyl-D-erythritol 2,4-cyclodiphosphate synthase (174 aa).

A divalent metal cation contacts are provided by D13, H15, and H61. 13–15 contributes to the 4-CDP-2-C-methyl-D-erythritol 2-phosphate binding site; it reads DAH. Residues 75–77, 149–152, F156, and H159 contribute to the 4-CDP-2-C-methyl-D-erythritol 2-phosphate site; these read DIG and TTTD.

Belongs to the IspF family. In terms of assembly, homotrimer. A divalent metal cation serves as cofactor.

The enzyme catalyses 4-CDP-2-C-methyl-D-erythritol 2-phosphate = 2-C-methyl-D-erythritol 2,4-cyclic diphosphate + CMP. Its pathway is isoprenoid biosynthesis; isopentenyl diphosphate biosynthesis via DXP pathway; isopentenyl diphosphate from 1-deoxy-D-xylulose 5-phosphate: step 4/6. In terms of biological role, involved in the biosynthesis of isopentenyl diphosphate (IPP) and dimethylallyl diphosphate (DMAPP), two major building blocks of isoprenoid compounds. Catalyzes the conversion of 4-diphosphocytidyl-2-C-methyl-D-erythritol 2-phosphate (CDP-ME2P) to 2-C-methyl-D-erythritol 2,4-cyclodiphosphate (ME-CPP) with a corresponding release of cytidine 5-monophosphate (CMP). The chain is 2-C-methyl-D-erythritol 2,4-cyclodiphosphate synthase from Bifidobacterium longum (strain NCC 2705).